A 534-amino-acid polypeptide reads, in one-letter code: CTP synthase (534 aa).

The tract at residues 1–265 (MKYIVVTGGV…TTQLMKHLRL (265 aa)) is amidoligase domain. Residue S12 participates in CTP binding. UTP is bound at residue S12. 13–18 (GLGKGI) is an ATP binding site. Position 53 (Y53) interacts with L-glutamine. D70 serves as a coordination point for ATP. Mg(2+) contacts are provided by D70 and E140. Residues 147 to 149 (DIE), 186 to 191 (KTKPTQ), and K222 each bind CTP. UTP contacts are provided by residues 186–191 (KTKPTQ) and K222. Residues 289 to 530 (KLAIVGKYTN…VRAMCKYRKE (242 aa)) enclose the Glutamine amidotransferase type-1 domain. Position 352 (G352) interacts with L-glutamine. C379 (nucleophile; for glutamine hydrolysis) is an active-site residue. L-glutamine is bound by residues 380–383 (LGMQ), E403, and R460. Residues H503 and E505 contribute to the active site.

This sequence belongs to the CTP synthase family. As to quaternary structure, homotetramer.

The catalysed reaction is UTP + L-glutamine + ATP + H2O = CTP + L-glutamate + ADP + phosphate + 2 H(+). The enzyme catalyses L-glutamine + H2O = L-glutamate + NH4(+). It carries out the reaction UTP + NH4(+) + ATP = CTP + ADP + phosphate + 2 H(+). Its pathway is pyrimidine metabolism; CTP biosynthesis via de novo pathway; CTP from UDP: step 2/2. With respect to regulation, allosterically activated by GTP, when glutamine is the substrate; GTP has no effect on the reaction when ammonia is the substrate. The allosteric effector GTP functions by stabilizing the protein conformation that binds the tetrahedral intermediate(s) formed during glutamine hydrolysis. Inhibited by the product CTP, via allosteric rather than competitive inhibition. Functionally, catalyzes the ATP-dependent amination of UTP to CTP with either L-glutamine or ammonia as the source of nitrogen. Regulates intracellular CTP levels through interactions with the four ribonucleotide triphosphates. This is CTP synthase from Methanosarcina mazei (strain ATCC BAA-159 / DSM 3647 / Goe1 / Go1 / JCM 11833 / OCM 88) (Methanosarcina frisia).